Reading from the N-terminus, the 518-residue chain is Probable bifunctional methylthioribulose-1-phosphate dehydratase/enolase-phosphatase E1 (518 aa).

Residues 1–247 (MAAAPPAVAV…AIKLHQIGLD (247 aa)) are methylthioribulose-1-phosphate dehydratase. Cysteine 119 lines the substrate pocket. Zn(2+) is bound by residues histidine 137 and histidine 139. Glutamate 162 (proton donor/acceptor; for methylthioribulose-1-phosphate dehydratase activity) is an active-site residue. Residue histidine 212 participates in Zn(2+) binding. The tract at residues 279–518 (IVLDIEGTTT…FKTITSFAEI (240 aa)) is enolase-phosphatase E1. 2 residues coordinate Mg(2+): aspartate 282 and glutamate 284. Substrate is bound by residues 417-418 (SS) and lysine 451. Aspartate 477 contributes to the Mg(2+) binding site.

It in the N-terminal section; belongs to the aldolase class II family. MtnB subfamily. The protein in the C-terminal section; belongs to the HAD-like hydrolase superfamily. MasA/MtnC family. Zn(2+) is required as a cofactor. Mg(2+) serves as cofactor.

It catalyses the reaction 5-(methylsulfanyl)-D-ribulose 1-phosphate = 5-methylsulfanyl-2,3-dioxopentyl phosphate + H2O. It carries out the reaction 5-methylsulfanyl-2,3-dioxopentyl phosphate + H2O = 1,2-dihydroxy-5-(methylsulfanyl)pent-1-en-3-one + phosphate. The protein operates within amino-acid biosynthesis; L-methionine biosynthesis via salvage pathway; L-methionine from S-methyl-5-thio-alpha-D-ribose 1-phosphate: step 2/6. Its pathway is amino-acid biosynthesis; L-methionine biosynthesis via salvage pathway; L-methionine from S-methyl-5-thio-alpha-D-ribose 1-phosphate: step 3/6. It functions in the pathway amino-acid biosynthesis; L-methionine biosynthesis via salvage pathway; L-methionine from S-methyl-5-thio-alpha-D-ribose 1-phosphate: step 4/6. The polypeptide is Probable bifunctional methylthioribulose-1-phosphate dehydratase/enolase-phosphatase E1 (Populus trichocarpa (Western balsam poplar)).